The sequence spans 177 residues: Ferritin light chain, oocyte isoform (177 aa).

Residues 9–158 (QNYHEESEAG…DHLTNLRRVK (150 aa)) enclose the Ferritin-like diiron domain. Fe cation-binding residues include E26, H64, and E106.

It belongs to the ferritin family. In terms of assembly, oligomer of 24 subunits. There are two types of subunits: L (light) chain and H (heavy) chain. The functional molecule is roughly spherical and contains a central cavity into which the insoluble mineral iron core is deposited.

In terms of biological role, stores iron in a soluble, non-toxic, readily available form. Important for iron homeostasis. Iron is taken up in the ferrous form and deposited as ferric hydroxides after oxidation. The polypeptide is Ferritin light chain, oocyte isoform (Xenopus laevis (African clawed frog)).